A 162-amino-acid chain; its full sequence is MQHLVLIGFMGSGKSSLAQELGLALKLEVLDTDMIISERVGLSVREIFEELGEDNFRMFEKNLIDELKTLKTPHVISTGGGIVMHENLKGLGTTFYLKMDFETLIKRLNQKEREKRPLLNNLTQAKELFEKRQALYEKNASFIIDARGGLNNSLKQVLQFIA.

11–16 (GSGKSS) is a binding site for ATP. S15 is a binding site for Mg(2+). Substrate-binding residues include D33, R57, and G80. An LID domain region spans residues 109–123 (NQKEREKRPLLNNLT). ATP is bound at residue R116. Residue R132 participates in substrate binding.

It belongs to the shikimate kinase family. In terms of assembly, monomer. It depends on Mg(2+) as a cofactor.

Its subcellular location is the cytoplasm. The catalysed reaction is shikimate + ATP = 3-phosphoshikimate + ADP + H(+). It functions in the pathway metabolic intermediate biosynthesis; chorismate biosynthesis; chorismate from D-erythrose 4-phosphate and phosphoenolpyruvate: step 5/7. Its function is as follows. Catalyzes the specific phosphorylation of the 3-hydroxyl group of shikimic acid using ATP as a cosubstrate. The sequence is that of Shikimate kinase (aroK) from Helicobacter pylori (strain ATCC 700392 / 26695) (Campylobacter pylori).